A 498-amino-acid polypeptide reads, in one-letter code: Probable malate:quinone oxidoreductase 2 (498 aa).

Belongs to the MQO family. FAD serves as cofactor.

It carries out the reaction (S)-malate + a quinone = a quinol + oxaloacetate. The protein operates within carbohydrate metabolism; tricarboxylic acid cycle; oxaloacetate from (S)-malate (quinone route): step 1/1. This is Probable malate:quinone oxidoreductase 2 from Staphylococcus aureus (strain MW2).